The primary structure comprises 565 residues: Carboxylesterase 1D (565 aa).

A signal peptide spans 1–18 (MGLYPLIWLSLAACTAWG). Asparagine 79 is a glycosylation site (N-linked (GlcNAc...) asparagine). A disulfide bond links cysteine 87 and cysteine 116. Serine 221 (acyl-ester intermediate) is an active-site residue. Residues cysteine 273 and cysteine 284 are joined by a disulfide bond. The Charge relay system role is filled by glutamate 353. The residue at position 382 (lysine 382) is an N6-succinyllysine. The active-site Charge relay system is the histidine 466. N-linked (GlcNAc...) asparagine glycosylation is present at asparagine 489. The Prevents secretion from ER motif lies at 562-565 (HVEL).

It belongs to the type-B carboxylesterase/lipase family. As to quaternary structure, homotrimer. Highest expression occurs in liver with lower levels in adipose tissue, kidney, heart, intestine, lung, testis and thymus.

It is found in the endoplasmic reticulum lumen. The protein localises to the cytoplasm. The protein resides in the cytosol. Its subcellular location is the lipid droplet. It localises to the microsome. The catalysed reaction is a carboxylic ester + H2O = an alcohol + a carboxylate + H(+). The enzyme catalyses a long-chain fatty acyl ethyl ester + H2O = a long-chain fatty acid + ethanol + H(+). It carries out the reaction all-trans-retinyl hexadecanoate + H2O = all-trans-retinol + hexadecanoate + H(+). Major lipase in white adipose tissue. Involved in the metabolism of xenobiotics and of natural substrates. Hydrolyzes triacylglycerols and monoacylglycerols, with a preference for monoacylglycerols. The susceptibility of the substrate increases with decreasing acyl chain length of the fatty acid moiety. Catalyzes the synthesis of fatty acid ethyl esters. Hydrolyzes retinyl esters. The protein is Carboxylesterase 1D of Mus musculus (Mouse).